Reading from the N-terminus, the 184-residue chain is Protein Iojap-related, mitochondrial (184 aa).

The N-terminal 39 residues, 1 to 39 (MLTTLRSRCSSLLLNQSWKLAPNRIFASSPSFSSSAGIS), are a transit peptide targeting the mitochondrion.

Belongs to the Iojap/RsfS family.

It is found in the mitochondrion. May be a ribosome silencing factor involved in organelle biogenesis and required for germination. This chain is Protein Iojap-related, mitochondrial, found in Arabidopsis thaliana (Mouse-ear cress).